Reading from the N-terminus, the 623-residue chain is Transcriptional activator of proteases prtT (623 aa).

Positions 50 to 79 (CHTCRKLKTRCDLDPRGHACRRCLSLRIDC) form a DNA-binding region, zn(2)-C6 fungal-type.

The protein belongs to the prtT family.

Its subcellular location is the nucleus. Functionally, transcription factor required for protein utilization and degradation. Regulates transcription of major secreted proteases. This Aspergillus niger (strain ATCC MYA-4892 / CBS 513.88 / FGSC A1513) protein is Transcriptional activator of proteases prtT (prtT).